The following is a 1141-amino-acid chain: cGMP-inhibited 3',5'-cyclic phosphodiesterase 3A (1141 aa).

Positions 1–42 are disordered; the sequence is MAVRGEAAQDLAKPGLGGASPARVARGNHRHRGESSPSPRGS. The helical transmembrane segment at 62 to 82 threads the bilayer; it reads SALCAGSLSVLLALLVRLVGG. The tract at residues 90–111 is disordered; that stretch reads KSQEAAAEEEEEEGARGGVFPG. 5 consecutive transmembrane segments (helical) span residues 127–147, 157–177, 182–202, 207–227, and 229–249; these read LQPA…GLCL, AVAL…SLGV, LLSL…TWLV, LGVL…VSLE, and FKVA…LLLA. Serine 310 carries the phosphoserine modification. Low complexity predominate over residues 433-445; sequence RVSSTWTTTTSAT. The disordered stretch occupies residues 433 to 483; it reads RVSSTWTTTTSATGLPTLEPAPVRRDRSASIKPHEAPSPSAVNPDSWNAPG. Over residues 454–467 the composition is skewed to basic and acidic residues; it reads PVRRDRSASIKPHE. The span at 472–483 shows a compositional bias: polar residues; the sequence is SAVNPDSWNAPG. Phosphoserine occurs at positions 492, 520, 524, and 533. The segment at 505-654 is disordered; it reads VKAKKQNRPG…CQREPQRKAS (150 aa). The span at 522-532 shows a compositional bias: pro residues; the sequence is VPSPSSSPPQG. Over residues 533-544 the composition is skewed to low complexity; it reads SPASSPVSNSAS. Residues 618 to 637 are compositionally biased toward polar residues; it reads TSQVTSDYETNNNSDSSDIL. The interval 669-1141 is interaction with SLFN12; the sequence is KPILAPEPLV…EETLAPQPDL (473 aa). The PDEase domain maps to 674–1093; the sequence is PEPLVMDNLD…MMWKKVIEEE (420 aa). Histidine 752 serves as the catalytic Proton donor. Histidine 752 lines the AMP pocket. Mn(2+) contacts are provided by histidine 756, histidine 836, aspartate 837, and aspartate 950. AMP is bound by residues aspartate 837, aspartate 950, and glutamine 1001. Mg(2+) is bound at residue aspartate 837. 2 disordered regions span residues 1024 to 1060 and 1120 to 1141; these read GKWV…SSIA and KEEE…QPDL. Positions 1029-1046 are enriched in acidic residues; sequence DSDDSGDTDDPEEEEEEA. Serine 1033 carries the phosphoserine modification. Threonine 1036 bears the Phosphothreonine mark. Lysine 1120 participates in a covalent cross-link: Glycyl lysine isopeptide (Lys-Gly) (interchain with G-Cter in SUMO2).

Belongs to the cyclic nucleotide phosphodiesterase family. PDE3 subfamily. The cofactor is Mn(2+). Mg(2+) is required as a cofactor.

It is found in the membrane. It localises to the cytoplasm. The protein resides in the cytosol. It catalyses the reaction a nucleoside 3',5'-cyclic phosphate + H2O = a nucleoside 5'-phosphate + H(+). The enzyme catalyses 3',5'-cyclic AMP + H2O = AMP + H(+). It carries out the reaction 3',5'-cyclic GMP + H2O = GMP + H(+). The catalysed reaction is 3',5'-cyclic UMP + H2O = UMP + H(+). With respect to regulation, inhibited by cGMP. Cyclic nucleotide phosphodiesterase with specificity for the second messengers cAMP and cGMP, which are key regulators of many important physiological processes. Also has activity toward cUMP. Independently of its catalytic activity it is part of an E2/17beta-estradiol-induced pro-apoptotic signaling pathway. E2 stabilizes the PDE3A/SLFN12 complex in the cytosol, promoting the dephosphorylation of SLFN12 and activating its pro-apoptotic ribosomal RNA/rRNA ribonuclease activity. This apoptotic pathway might be relevant in tissues with high concentration of E2 and be for instance involved in placenta remodeling. The sequence is that of cGMP-inhibited 3',5'-cyclic phosphodiesterase 3A from Mus musculus (Mouse).